An 89-amino-acid chain; its full sequence is Large ribosomal subunit protein bL27 (89 aa).

The tract at residues Met-1 to Gly-22 is disordered.

Belongs to the bacterial ribosomal protein bL27 family.

In Dinoroseobacter shibae (strain DSM 16493 / NCIMB 14021 / DFL 12), this protein is Large ribosomal subunit protein bL27.